A 434-amino-acid chain; its full sequence is Isocitrate lyase (434 aa).

A substrate-binding site is contributed by 91–93 (SGW). Residue D157 coordinates Mg(2+). Catalysis depends on C195, which acts as the Proton acceptor. Substrate is bound by residues 196-197 (GH), R232, 317-321 (NCSPS), and T351.

This sequence belongs to the isocitrate lyase/PEP mutase superfamily. Isocitrate lyase family. Homotetramer. Mg(2+) is required as a cofactor.

The catalysed reaction is D-threo-isocitrate = glyoxylate + succinate. It functions in the pathway carbohydrate metabolism; glyoxylate cycle; (S)-malate from isocitrate: step 1/2. In terms of biological role, involved in the metabolic adaptation in response to environmental changes. Catalyzes the reversible formation of succinate and glyoxylate from isocitrate, a key step of the glyoxylate cycle, which operates as an anaplerotic route for replenishing the tricarboxylic acid cycle during growth on fatty acid substrates. This chain is Isocitrate lyase (aceA), found in Salmonella typhimurium (strain LT2 / SGSC1412 / ATCC 700720).